A 34-amino-acid chain; its full sequence is Beta/mu-theraphotoxin-Pe1a (34 aa).

Cystine bridges form between C2/C16, C9/C21, and C15/C28.

The protein belongs to the neurotoxin 10 (Hwtx-1) family. 54 (ProTx-1) subfamily. In terms of tissue distribution, expressed by the venom gland.

The protein localises to the secreted. Ion channel impairing toxin that inhibits voltage-gated sodium channels. The recombinantly expressed toxin shows a weak activity against Nav1.7/SCN9A (25% inhibition at 10 uM), and shifts the voltage dependence of channel activation to more depolarized potentials. The sequence is that of Beta/mu-theraphotoxin-Pe1a from Phormingochilus everetti (Malaysian purple earth tiger tarantula).